Reading from the N-terminus, the 378-residue chain is Chaperone protein DnaJ (378 aa).

In terms of domain architecture, J spans 6–70; that stretch reads DYYDVLGVSR…QKRQQYDQFG (65 aa). Residues 137 to 219 form a CR-type zinc finger; that stretch reads GKTSEISYSR…CHGKGVKTQK (83 aa). Residues C150, C153, C167, C170, C193, C196, C207, and C210 each coordinate Zn(2+). 4 CXXCXGXG motif repeats span residues 150–157, 167–174, 193–200, and 207–214; these read CEVCKGSG, CDKCGGSG, CDKCTGSG, and CHNCHGKG.

This sequence belongs to the DnaJ family. Homodimer. Zn(2+) is required as a cofactor.

The protein localises to the cytoplasm. Functionally, participates actively in the response to hyperosmotic and heat shock by preventing the aggregation of stress-denatured proteins and by disaggregating proteins, also in an autonomous, DnaK-independent fashion. Unfolded proteins bind initially to DnaJ; upon interaction with the DnaJ-bound protein, DnaK hydrolyzes its bound ATP, resulting in the formation of a stable complex. GrpE releases ADP from DnaK; ATP binding to DnaK triggers the release of the substrate protein, thus completing the reaction cycle. Several rounds of ATP-dependent interactions between DnaJ, DnaK and GrpE are required for fully efficient folding. Also involved, together with DnaK and GrpE, in the DNA replication of plasmids through activation of initiation proteins. In Lactobacillus delbrueckii subsp. bulgaricus (strain ATCC 11842 / DSM 20081 / BCRC 10696 / JCM 1002 / NBRC 13953 / NCIMB 11778 / NCTC 12712 / WDCM 00102 / Lb 14), this protein is Chaperone protein DnaJ.